We begin with the raw amino-acid sequence, 918 residues long: MKFAYRFSNLLGTVYRRGNLNFTCDGNSVISPVGNRVTVFDLKNNKSDTLPLATRYNVKCVGLSPDGRLAIIVDEGGDALLVSLVCRSVLHHFHFKGSVHSVSFSPDGRKFVVTKGNIAQMYHAPGKKREFNAFVLDKTYFGPYDETTCIDWTDDSRCFVVGSKDMSTWVFGAERWDNLIYYALGGHKDAIVACFFESNSLDLYSLSQDGVLCMWQCDTPPEGLRLKPPAGWKADLLQREQEEEEEEGDRETTIRGKATPAEEEKTGKVKYSRLAKYFFNKEGDFNNLTAAAFHKKSHLLVTGFASGIFHLHELPEFNLIHSLSISDQSIASVAINSSGDWIAFGCSGLGQLLVWEWQSESYVLKQQGHFNSMVALAYSPDGQYIVTGGDDGKVKVWNTLSGFCFVTFTEHSSGVTGVTFTATGYVVVTSSMDGTVRAFDLHRYRNFRTFTSPRPTQFSCVAVDASGEIVSAGAQDSFEIFVWSMQTGRLLDVLSGHEGPISGLCFNPMKSILASASWDKTERLWDMFDSWRTKETLALTSDALAVTFRPDGAELAVATLNSQITFWDPENAVQTGSIEGRHHLKTGRKELDKITAKHAAKGKAFTTLCYSADGQSILAGGMSKFVCIYHVREQILMKRFEISCNLSLDAMEEFLNRRKMTEFGNLALIDQDAGQEDGVAIPLPGVRKGDMSSRHFKPEIRVTSLRFSPTGRCWAATTTEGLLIFSLDTRVLFDPFELDTSITPGRVREALRQQDFTRAILMALRLNESKLVQEALEAVPSGEIEVVTSSLPELYVEKVLEFLASSFEVSRHLEFYLLWTHRLLMLHGQKLKSRAGTLLPVIQFLQKSIQRHLDDLSKLCSWNRYNMQYALAVSKQRGTKRSLDPLGSEEEAEASEDDSLHLLGGGGRDSEEGMLAES.

WD repeat units lie at residues 12-50 (GTVYRRGNLNFTCDGNSVISPVGNRVTVFDLKNNKSDTL), 53-93 (ATRY…LHHF), 94-132 (HFKGSVHSVSFSPDGRKFVVTKGNIAQMYHAPGKKREFN), 142-181 (GPYDETTCIDWTDDSRCFVVGSKDMSTWVFGAERWDNLIY), and 186-225 (GHKDAIVACFFESNSLDLYSLSQDGVLCMWQCDTPPEGLR). Residues 237 to 262 (LQREQEEEEEEGDRETTIRGKATPAE) are disordered. Residues 250-262 (RETTIRGKATPAE) show a composition bias toward basic and acidic residues. WD repeat units follow at residues 283–322 (GDFNNLTAAAFHKKSHLLVTGFASGIFHLHELPEFNLIHS), 325–365 (ISDQ…YVLK), 368–407 (GHFNSMVALAYSPDGQYIVTGGDDGKVKVWNTLSGFCFVT), 410–449 (EHSSGVTGVTFTATGYVVVTSSMDGTVRAFDLHRYRNFRT), 453–495 (PRPT…DVLS), 496–535 (GHEGPISGLCFNPMKSILASASWDKTERLWDMFDSWRTKE), 538–577 (ALTSDALAVTFRPDGAELAVATLNSQITFWDPENAVQTGS), 600–639 (AKGKAFTTLCYSADGQSILAGGMSKFVCIYHVREQILMKR), and 697–737 (KPEI…DPFE). The tract at residues 878–918 (GTKRSLDPLGSEEEAEASEDDSLHLLGGGGRDSEEGMLAES) is disordered. Acidic residues predominate over residues 887–897 (GSEEEAEASED). Phosphoserine is present on residues S895 and S899.

It belongs to the WD repeat PWP2 family. In terms of assembly, part of the small subunit (SSU) processome, composed of more than 70 proteins and the RNA chaperone small nucleolar RNA (snoRNA) U3.

It is found in the nucleus. Its subcellular location is the nucleolus. Its function is as follows. Part of the small subunit (SSU) processome, first precursor of the small eukaryotic ribosomal subunit. During the assembly of the SSU processome in the nucleolus, many ribosome biogenesis factors, an RNA chaperone and ribosomal proteins associate with the nascent pre-rRNA and work in concert to generate RNA folding, modifications, rearrangements and cleavage as well as targeted degradation of pre-ribosomal RNA by the RNA exosome. This Pongo abelii (Sumatran orangutan) protein is Periodic tryptophan protein 2 homolog (PWP2).